Here is a 230-residue protein sequence, read N- to C-terminus: MGCQEAFRTTLLEPFSLKKDEAAKVKSFKDSVSYIEEALGVYFTEVEKQWKLFNTEKSWSPVGLEDAKLPKEAYRFKLTWILKRIFKLRCLQVFLYYFLIVYTSGNVDLISRFLFPVVMFFIMTRDFQNMGMIVLSVKMEHKMQFLSTIINEQESGANGWDEIAKKMNRYLFEKKVWNNEEFFYDGLDCEWFFSCFFYRLLSLKKTMWFASLNVELWPYVKEAQSVVTSL.

Residues 93–115 (VFLYYFLIVYTSGNVDLISRFLF) traverse the membrane as a helical segment.

It belongs to the DUP/COS family.

Its subcellular location is the membrane. This is an uncharacterized protein from Saccharomyces cerevisiae (strain ATCC 204508 / S288c) (Baker's yeast).